Consider the following 228-residue polypeptide: DNA-3-methyladenine glycosylase 1 (228 aa).

The Proton acceptor role is filled by Asp-170.

It belongs to the alkylbase DNA glycosidase AlkA family.

It carries out the reaction Hydrolysis of alkylated DNA, releasing 3-methyladenine, 3-methylguanine, 7-methylguanine and 7-methyladenine.. In terms of biological role, hydrolysis of the deoxyribose N-glycosidic bond to excise 3-methyladenine or 7-methyladenine from the damaged DNA polymer formed by alkylation lesions. Can release ethylated and propylated bases from DNA in addition to 3-methyladenine. The sequence is that of DNA-3-methyladenine glycosylase 1 (mag1) from Schizosaccharomyces pombe (strain 972 / ATCC 24843) (Fission yeast).